The chain runs to 404 residues: NADH-quinone oxidoreductase subunit D 2 (404 aa).

This sequence belongs to the complex I 49 kDa subunit family. As to quaternary structure, NDH-1 is composed of 14 different subunits. Subunits NuoB, C, D, E, F, and G constitute the peripheral sector of the complex.

Its subcellular location is the cell inner membrane. It carries out the reaction a quinone + NADH + 5 H(+)(in) = a quinol + NAD(+) + 4 H(+)(out). Functionally, NDH-1 shuttles electrons from NADH, via FMN and iron-sulfur (Fe-S) centers, to quinones in the respiratory chain. The immediate electron acceptor for the enzyme in this species is believed to be ubiquinone. Couples the redox reaction to proton translocation (for every two electrons transferred, four hydrogen ions are translocated across the cytoplasmic membrane), and thus conserves the redox energy in a proton gradient. The sequence is that of NADH-quinone oxidoreductase subunit D 2 from Rhizobium etli (strain ATCC 51251 / DSM 11541 / JCM 21823 / NBRC 15573 / CFN 42).